Here is a 392-residue protein sequence, read N- to C-terminus: Cyclic AMP receptor 1 (392 aa).

At 1–13 (MGLLDGNPANETS) the chain is on the extracellular side. The N-linked (GlcNAc...) asparagine glycan is linked to Asn10. The chain crosses the membrane as a helical span at residues 14–33 (LVLLLFADFSSMLGCMAVLI). Topologically, residues 34-47 (GFWRLKLLRNHVTK) are cytoplasmic. Residues 48–68 (VIACFCATSFCKDFPSTILTL) traverse the membrane as a helical segment. Residues 69-83 (TNTAVNGGFPCYLYA) are Extracellular-facing. Residues 84–109 (IVITYGSFACWLWTLCLAISIYMLIV) traverse the membrane as a helical segment. The Cytoplasmic portion of the chain corresponds to 110–120 (KREPEPERFEK). The chain crosses the membrane as a helical span at residues 121 to 139 (YYYLLCWGLPLISTIVMLA). The Extracellular portion of the chain corresponds to 140–162 (KNTVQFVGNWCWIGVSFTGYRFG). Residues 163–181 (LFYGPFLFIWAISAVLVGL) traverse the membrane as a helical segment. Residues 182–205 (TSRYTYVVIHNGVSDNKEKHLTYQ) are Cytoplasmic-facing. A helical membrane pass occupies residues 206–224 (FKLINYIIVFLVCWVFAVV). Over 225-235 (NRIVNGLNMFP) the chain is Extracellular. The helical transmembrane segment at 236–260 (PALNILHTYLSVSHGFWASVTFIYN) threads the bilayer. At 261 to 392 (NPLMWRYFGA…STSTNGQGNN (132 aa)) the chain is on the cytoplasmic side. Disordered regions lie at residues 292 to 324 (NKNN…VQCS) and 339 to 392 (VNNQ…QGNN). Over residues 298–310 (PSPYSSSRGTSGK) the composition is skewed to polar residues. 13 positions are modified to phosphoserine: Ser299, Ser302, Ser303, Ser304, Ser308, Ser360, Ser361, Ser362, Ser363, Ser364, Ser366, Ser367, and Ser368. The span at 340–367 (NNQQNLNNNYGLQQNYNDEGSSSSSLSS) shows a compositional bias: low complexity. Positions 375–392 (VEMQNIQISTSTNGQGNN) are enriched in polar residues.

This sequence belongs to the G-protein coupled receptor 5 family. Post-translationally, C-terminal Ser or Thr residues may be phosphorylated.

It is found in the membrane. Its function is as follows. Receptor for cAMP. Coordinates the aggregation of individual cells into a multicellular organism and regulates the expression of a large number of developmentally regulated genes. The activity of this receptor is mediated by G proteins. The protein is Cyclic AMP receptor 1 (carA-1) of Dictyostelium discoideum (Social amoeba).